We begin with the raw amino-acid sequence, 716 residues long: Interleukin-31 receptor subunit alpha (716 aa).

The signal sequence occupies residues 1–18 (MWTLALWAFSFLCKFSLA). The Extracellular portion of the chain corresponds to 19–499 (VLPTKPENIS…TNGVRINFKT (481 aa)). 5 Fibronectin type-III domains span residues 23-115 (KPEN…IAKT), 117-211 (PPII…TMEE), 213-304 (PHVL…ILRI), 305-403 (PDVH…QAYA), and 408-502 (PLKG…TLSI). Residues Asn36, Asn48, and Asn64 are each glycosylated (N-linked (GlcNAc...) asparagine). The N-linked (GlcNAc...) asparagine glycan is linked to Asn382. Residues 500–520 (LSISVFEIVLLTSLVGGGLLL) traverse the membrane as a helical segment. The Cytoplasmic segment spans residues 521–716 (LSIKTVTFGL…NIPEHSKGEV (196 aa)). Disordered stretches follow at residues 622-641 (EYVT…FKEP) and 648-696 (ASED…LKNS). The span at 670–679 (QPSSSCQSPG) shows a compositional bias: polar residues.

This sequence belongs to the type I cytokine receptor family. Type 2 subfamily. In terms of assembly, heterodimer with OSMR. Interacts with JAK1 and STAT3. N-glycosylated. As to expression, expressed in a subset of dorsal root ganglia neurons. Expressed in spinal cord and trigeminal ganglion (at protein level). Expressed in skin, testis, bone marrow and thymus.

It is found in the cell membrane. The protein localises to the presynaptic cell membrane. The protein resides in the cell projection. Its subcellular location is the axon. Functionally, associates with OSMR to form the interleukin-31 receptor which activates STAT3 and to a lower extent STAT1 and STAT5. May function in skin immunity. Mediates IL31-induced itch, probably in a manner dependent on cation channels TRPA1 and TRPV1. Positively regulates numbers and cycling status of immature subsets of myeloid progenitor cells in bone marrow in vivo and enhances myeloid progenitor cell survival in vitro. This chain is Interleukin-31 receptor subunit alpha (Il31ra), found in Mus musculus (Mouse).